The sequence spans 247 residues: MCSRGVGRTTEQGIRIGRAGERERIRGRVRAVIGQLEGILRDLKEVAKELKEVVEQIDRLTSDFEFELDTDDWTPGTVSSTSSSEKGGPLCDLGPLDFLSSDSWEFCSFLEASTPSDSGDGSDRPPDFRLLNGGVTPNGPDSSSEEIPIAQQKPPPSKNSGSRDRVRFSDKVLYHALCCDDSEDPPYGQETPRDPPRATAPCAVMKSKPGGLTGVRKGTRNCSTQTVCDKSTQTVLPYVPKKGKDKL.

Residues 30-65 (RAVIGQLEGILRDLKEVAKELKEVVEQIDRLTSDFE) are a coiled coil. Disordered stretches follow at residues 69-90 (DTDD…GGPL), 112-166 (ASTP…RDRV), and 180-217 (DDSE…GVRK). Over residues 76-85 (GTVSSTSSSE) the composition is skewed to polar residues.

Belongs to the INSYN1 family.

The protein resides in the postsynaptic density. May be a component of the protein machinery at the inhibitory synapses, probably acting as a scaffold. The chain is Inhibitory synaptic factor 1 from Xenopus laevis (African clawed frog).